The chain runs to 2153 residues: RNA-directed RNA polymerase L (2153 aa).

His-36, Glu-54, Asp-97, Glu-110, and Val-111 together coordinate Mn(2+). The For endonuclease activity role is filled by Lys-124. The region spanning 957 to 1143 (TGKKIRFKRK…AVNQEMWKSM (187 aa)) is the RdRp catalytic domain. Residue Asp-1100 participates in Mg(2+) binding.

Belongs to the Bunyavirales RNA polymerase family. As to quaternary structure, interacts with the viral nucleoprotein. Mn(2+) is required as a cofactor. Mg(2+) serves as cofactor.

Its subcellular location is the host cytoplasm. It localises to the host perinuclear region. It catalyses the reaction RNA(n) + a ribonucleoside 5'-triphosphate = RNA(n+1) + diphosphate. Its function is as follows. RNA-dependent RNA polymerase, which is responsible for the replication and transcription of the viral RNA genome using antigenomic RNA as an intermediate. During transcription, synthesizes subgenomic RNAs and assures their capping by a cap-snatching mechanism, which involves the endonuclease activity cleaving the host capped pre-mRNAs. These short capped RNAs are then used as primers for viral transcription. Cleaves ssRNA substrates but not DNA. Seems to downregulate the expression of its own and heterologous mRNAs through its endonuclease activity. The sequence is that of RNA-directed RNA polymerase L from Black Creek Canal orthohantavirus (BCCV).